Consider the following 185-residue polypeptide: Homeobox-leucine zipper protein ATHB-22 (185 aa).

The segment at residues 76–135 (TSEQLKFLERSFQEEIKLNPDRKMKLNPDRKMKLSKELGLQPRQIAVWFQNRKARWKNKQ) is a DNA-binding region (homeobox). Residues 136–164 (LEHLYESLRQEFDIVSREKELLQEELIQL) are leucine-zipper.

It belongs to the HD-ZIP homeobox family. Class I subfamily. As to expression, expressed in siliques.

The protein localises to the nucleus. Functionally, probable transcription factor. The polypeptide is Homeobox-leucine zipper protein ATHB-22 (ATHB-22) (Arabidopsis thaliana (Mouse-ear cress)).